The chain runs to 306 residues: Mitochondrial substrate carrier family protein M (306 aa).

The Mitochondrial intermembrane segment spans residues M1–E10. Solcar repeat units lie at residues L5–I98, L108–Y195, and L207–S299. Residues G11 to L31 traverse the membrane as a helical segment. Over K32–R72 the chain is Mitochondrial matrix. Residues G73–M89 traverse the membrane as a helical segment. Over H90–H113 the chain is Mitochondrial intermembrane. Residues F114 to I134 traverse the membrane as a helical segment. Residues K135–E163 are Mitochondrial matrix-facing. A helical transmembrane segment spans residues G164–I184. The Mitochondrial intermembrane portion of the chain corresponds to Q185 to E211. A helical membrane pass occupies residues I212–V232. Residues V233–N278 lie on the Mitochondrial matrix side of the membrane. The helical transmembrane segment at T279–I296 threads the bilayer. Residues K297–E306 lie on the Mitochondrial intermembrane side of the membrane.

The protein belongs to the mitochondrial carrier (TC 2.A.29) family.

It localises to the mitochondrion inner membrane. In terms of biological role, mitochondrial solute carriers shuttle metabolites, nucleotides, and cofactors through the mitochondrial inner membrane. Transports folate across the inner membranes of mitochondria. The polypeptide is Mitochondrial substrate carrier family protein M (mcfM) (Dictyostelium discoideum (Social amoeba)).